Reading from the N-terminus, the 285-residue chain is Nucleotide-binding protein HI_1146 (285 aa).

8–15 (GRSGAGKS) contributes to the ATP binding site. 56 to 59 (DIRN) serves as a coordination point for GTP.

Belongs to the RapZ-like family.

Its function is as follows. Displays ATPase and GTPase activities. This Haemophilus influenzae (strain ATCC 51907 / DSM 11121 / KW20 / Rd) protein is Nucleotide-binding protein HI_1146.